Here is a 371-residue protein sequence, read N- to C-terminus: Queuine tRNA-ribosyltransferase (371 aa).

The Proton acceptor role is filled by Asp-90. Residues 90–94, Asp-144, Gln-185, and Gly-212 contribute to the substrate site; that span reads DSGGF. The interval 243-249 is RNA binding; the sequence is GVGTPED. The active-site Nucleophile is Asp-262. An RNA binding; important for wobble base 34 recognition region spans residues 267–271; that stretch reads TRNAR. Zn(2+) is bound by residues Cys-300, Cys-302, Cys-305, and His-331.

Belongs to the queuine tRNA-ribosyltransferase family. As to quaternary structure, homodimer. Within each dimer, one monomer is responsible for RNA recognition and catalysis, while the other monomer binds to the replacement base PreQ1. The cofactor is Zn(2+).

The catalysed reaction is 7-aminomethyl-7-carbaguanine + guanosine(34) in tRNA = 7-aminomethyl-7-carbaguanosine(34) in tRNA + guanine. It participates in tRNA modification; tRNA-queuosine biosynthesis. Catalyzes the base-exchange of a guanine (G) residue with the queuine precursor 7-aminomethyl-7-deazaguanine (PreQ1) at position 34 (anticodon wobble position) in tRNAs with GU(N) anticodons (tRNA-Asp, -Asn, -His and -Tyr). Catalysis occurs through a double-displacement mechanism. The nucleophile active site attacks the C1' of nucleotide 34 to detach the guanine base from the RNA, forming a covalent enzyme-RNA intermediate. The proton acceptor active site deprotonates the incoming PreQ1, allowing a nucleophilic attack on the C1' of the ribose to form the product. After dissociation, two additional enzymatic reactions on the tRNA convert PreQ1 to queuine (Q), resulting in the hypermodified nucleoside queuosine (7-(((4,5-cis-dihydroxy-2-cyclopenten-1-yl)amino)methyl)-7-deazaguanosine). This chain is Queuine tRNA-ribosyltransferase, found in Acidithiobacillus ferrooxidans (strain ATCC 23270 / DSM 14882 / CIP 104768 / NCIMB 8455) (Ferrobacillus ferrooxidans (strain ATCC 23270)).